A 268-amino-acid polypeptide reads, in one-letter code: Regulation of nuclear pre-mRNA domain-containing protein 1A (268 aa).

Positions 1-133 constitute a CID domain; it reads MSAFSEAALE…QLRQALYGDR (133 aa).

This sequence belongs to the UPF0400 (RTT103) family. In terms of assembly, may form a heterodimer with RPRD1B. Associates with the RNA polymerase II subunit POLR2A (via CTD phosphorylated at 'Ser-2' and 'Ser-7' of the heptad repeats).

Its subcellular location is the nucleus. Functionally, interacts with phosphorylated C-terminal heptapeptide repeat domain (CTD) of the largest RNA polymerase II subunit POLR2A, and participates in dephosphorylation of the CTD by RPAP2. May act as a negative regulator of cyclin-D1 (CCND1) and cyclin-E (CCNE1) in the cell cycle. In Gallus gallus (Chicken), this protein is Regulation of nuclear pre-mRNA domain-containing protein 1A (RPRD1A).